The following is a 274-amino-acid chain: Diaminopimelate epimerase (274 aa).

Residues asparagine 11, glutamine 44, and asparagine 64 each coordinate substrate. Cysteine 73 serves as the catalytic Proton donor. Residues 74-75, asparagine 157, asparagine 190, and 208-209 each bind substrate; these read GN and ER. Cysteine 217 acts as the Proton acceptor in catalysis. Substrate is bound at residue 218 to 219; it reads GS.

It belongs to the diaminopimelate epimerase family. In terms of assembly, homodimer.

It is found in the cytoplasm. The catalysed reaction is (2S,6S)-2,6-diaminopimelate = meso-2,6-diaminopimelate. It functions in the pathway amino-acid biosynthesis; L-lysine biosynthesis via DAP pathway; DL-2,6-diaminopimelate from LL-2,6-diaminopimelate: step 1/1. Catalyzes the stereoinversion of LL-2,6-diaminopimelate (L,L-DAP) to meso-diaminopimelate (meso-DAP), a precursor of L-lysine and an essential component of the bacterial peptidoglycan. This Shigella boydii serotype 18 (strain CDC 3083-94 / BS512) protein is Diaminopimelate epimerase.